The sequence spans 138 residues: Histone H2B (138 aa).

Over residues 1–10 (MPPKAAEKKP) the composition is skewed to basic and acidic residues. Residues 1–47 (MPPKAAEKKPSTAGKAPAGKAPEKKEAGKKTTAAGGEKKKRSKTRKE) are disordered. N6-acetyllysine; alternate is present on residues lysine 8 and lysine 9. Residues lysine 8 and lysine 9 each participate in a glycyl lysine isopeptide (Lys-Gly) (interchain with G-Cter in SUMO); alternate cross-link. Residues 11–20 (STAGKAPAGK) show a composition bias toward low complexity. Position 15 is an N6-acetyllysine (lysine 15). Lysine 24 bears the N6-acetyllysine; alternate mark. Residue lysine 24 forms a Glycyl lysine isopeptide (Lys-Gly) (interchain with G-Cter in SUMO); alternate linkage. Lysine 25 is covalently cross-linked (Glycyl lysine isopeptide (Lys-Gly) (interchain with G-Cter in SUMO)). Lysine 132 is covalently cross-linked (Glycyl lysine isopeptide (Lys-Gly) (interchain with G-Cter in ubiquitin)).

It belongs to the histone H2B family. The nucleosome is a histone octamer containing two molecules each of H2A, H2B, H3 and H4 assembled in one H3-H4 heterotetramer and two H2A-H2B heterodimers. The octamer wraps approximately 147 bp of DNA. Monoubiquitinated to form H2BK123ub1. H2BK123ub1 gives a specific tag for epigenetic transcriptional activation and is also prerequisite for H3K4me and H3K79me formation. H2BK123ub1 also modulates the formation of double-strand breaks during meiosis and is a prerequisite for DNA-damage checkpoint activation. In terms of processing, acetylated by GCN5 to form H2BK11ac and H2BK16ac. H2BK16ac can also be formed by ESA1. Acetylation of N-terminal lysines and particularly formation of H2BK11acK16ac has a positive effect on transcription. Post-translationally, sumoylation to form H2BK6su or H2BK7su, and probably also H2BK16su or H2BK17su, occurs preferentially near the telomeres and represses gene transcription.

The protein localises to the nucleus. It localises to the chromosome. In terms of biological role, core component of nucleosome. Nucleosomes wrap and compact DNA into chromatin, limiting DNA accessibility to the cellular machineries which require DNA as a template. Histones thereby play a central role in transcription regulation, DNA repair, DNA replication and chromosomal stability. DNA accessibility is regulated via a complex set of post-translational modifications of histones, also called histone code, and nucleosome remodeling. The chain is Histone H2B (HTB1) from Ajellomyces capsulatus (Darling's disease fungus).